The following is a 1127-amino-acid chain: Nck-associated protein 1-like (1127 aa).

The segment at 638–670 (KAKNKKTRKQRQTPRKGEPERDKPGAESHRKNR) is disordered. The span at 639-651 (AKNKKTRKQRQTP) shows a compositional bias: basic residues. Positions 652-666 (RKGEPERDKPGAESH) are enriched in basic and acidic residues. A helical membrane pass occupies residues 996-1016 (VACLLLIFLAVSLPLLATDPS).

The protein belongs to the HEM-1/HEM-2 family. As to quaternary structure, in hematopoietic cells, component of the WAVE2 complex composed of ABI1, CYFIP1/SRA1, NCKAP1L/HEM1 and WASF2/WAVE2. Interacts with ARHGAP4, PIK3C3/VPS34 and PPP1R12A/MYPT1. Interacts with mammalian target of rapamycin complex 2 (mTORC2) components, including MTOR and RICTOR. As to expression, expressed only in cells of hematopoietic origin. Expressed in neutrophils (at protein level). Expressed in T-cells (at protein level).

The protein localises to the cell membrane. The protein resides in the cytoplasm. Essential hematopoietic-specific regulator of the actin cytoskeleton. Controls lymphocyte development, activation, proliferation and homeostasis, erythrocyte membrane stability, as well as phagocytosis and migration by neutrophils and macrophages. Component of the WAVE2 complex which signals downstream of RAC to stimulate F-actin polymerization. Required for stabilization and/or translation of the WAVE2 complex proteins in hematopoietic cells. Within the WAVE2 complex, enables the cortical actin network to restrain excessive degranulation and granule release by T-cells. Required for efficient T-lymphocyte and neutrophil migration. Exhibits complex cycles of activation and inhibition to generate waves of propagating the assembly with actin. Also involved in mechanisms WAVE-independent to regulate myosin and actin polymerization during neutrophil chemotaxis. In T-cells, required for proper mechanistic target of rapamycin complex 2 (mTORC2)-dependent AKT phosphorylation, cell proliferation and cytokine secretion, including that of IL2 and TNF. This Homo sapiens (Human) protein is Nck-associated protein 1-like.